Here is a 417-residue protein sequence, read N- to C-terminus: Odorant receptor Or1 (417 aa).

The Cytoplasmic portion of the chain corresponds to 1 to 2 (MK). A helical membrane pass occupies residues 3–23 (LNKLNPRWDAYDRRDSFWLQL). Topologically, residues 24 to 45 (LCLKYLGLWPPEDTDQATRNRY) are extracellular. A helical transmembrane segment spans residues 46–66 (IAYGWALRIMFLHLYALTQAL). The Cytoplasmic portion of the chain corresponds to 67–73 (YFKDVKD). The helical transmembrane segment at 74–94 (INDIANALFVLMTQVTLIYKL) threads the bilayer. At 95-133 (EKFNYNIARIQACLRKLNCTLYHPKQREEFSPVLQSMSG) the chain is on the extracellular side. Asn-112 is a glycosylation site (N-linked (GlcNAc...) asparagine). Residues 134–154 (VFWLMIFLMFVAIFTIIMWVM) form a helical membrane-spanning segment. Residues 155 to 178 (SPAFDNERRLPVPAWFPVDYHHSD) lie on the Cytoplasmic side of the membrane. Residues 179-199 (IVYGVLFLYQTIGIVMSATYN) form a helical membrane-spanning segment. Residues 200–284 (FSTDTMFSGL…ILSFGDEVQD (85 aa)) lie on the Extracellular side of the membrane. Residues 285 to 305 (IFQGSIFAQVCASVIIICMTL) form a helical membrane-spanning segment. The Cytoplasmic segment spans residues 306 to 317 (LQATGDDVTMAD). A helical transmembrane segment spans residues 318–338 (LLGCGFYLLVMTSQVFIFCYV). Residues 339–417 (GNEISYTTDK…LAVLQSMESE (79 aa)) are Extracellular-facing.

It belongs to the insect chemoreceptor superfamily. Heteromeric odorant receptor channel (TC 1.A.69) family. Or2a subfamily. As to expression, female-specific antennae and maxillary palp expression.

The protein localises to the cell membrane. Functionally, odorant receptor which plays a critical role in the anthropophilic host-seeking behavior; establishes the host preference to transmit malaria. May participate in the phenomenon of decreased host-seeking behavior in disease vector mosquitoes after blood feeding. The chain is Odorant receptor Or1 (OR1) from Anopheles gambiae (African malaria mosquito).